The primary structure comprises 216 residues: Sperm microtubule inner protein 8 (216 aa).

As to quaternary structure, microtubule inner protein component of sperm flagellar doublet microtubules. As to expression, expressed in testis, prostate and placenta.

It localises to the cytoplasm. The protein localises to the cytoskeleton. Its subcellular location is the flagellum axoneme. Functionally, microtubule inner protein (MIP) part of the dynein-decorated doublet microtubules (DMTs) in flagellum axoneme. May serve to reinforce and thus stabilize the microtubule structure in the sperm flagella. This Homo sapiens (Human) protein is Sperm microtubule inner protein 8.